The sequence spans 578 residues: Thiol:disulfide interchange protein DsbD (578 aa).

The N-terminal stretch at 1 to 24 is a signal peptide; that stretch reads MAQRFITLILLLCSILLAPHSAQA. Cystine bridges form between cysteine 134/cysteine 140 and cysteine 195/cysteine 317. 9 helical membrane passes run 183-203, 219-239, 256-276, 297-317, 318-338, 339-359, 370-390, 397-417, and 421-441; these read ALLIGIGIAFTPCVLPMYPLI, ILLLAIVYVQGMALTYTLLGL, YVLIGLSALFVLLALSMFGLY, GGSLAGVFAMGALAGLICSPC, TTAPLSAILLYIAQSGNMLAG, GGTLYLYALGMGIPLVIVTLF, WMQYVKEAFGFVILALPVFLL, VWGLRLWSLLAIAFFGWAFIL, and AHSGWARAFQLLLLAALLIAA. Positions 438-578 constitute a Thioredoxin domain; sequence LIAARPLQDW…FLQHLQNLPR (141 aa). Residues cysteine 493 and cysteine 496 are joined by a disulfide bond.

The protein belongs to the thioredoxin family. DsbD subfamily.

It is found in the cell inner membrane. The catalysed reaction is [protein]-dithiol + NAD(+) = [protein]-disulfide + NADH + H(+). It catalyses the reaction [protein]-dithiol + NADP(+) = [protein]-disulfide + NADPH + H(+). Its function is as follows. Required to facilitate the formation of correct disulfide bonds in some periplasmic proteins and for the assembly of the periplasmic c-type cytochromes. Acts by transferring electrons from cytoplasmic thioredoxin to the periplasm. This transfer involves a cascade of disulfide bond formation and reduction steps. The sequence is that of Thiol:disulfide interchange protein DsbD from Yersinia enterocolitica serotype O:8 / biotype 1B (strain NCTC 13174 / 8081).